Consider the following 464-residue polypeptide: Protein FAM90A16 (464 aa).

Disordered stretches follow at residues 1–42, 70–389, and 415–437; these read MMAR…DPRL, PATL…HDGA, and HSPE…SEAP. Composition is skewed to basic and acidic residues over residues 74–89 and 97–114; these read GKKE…KPRV and NKDK…DPQR. The segment covering 180-197 has biased composition (low complexity); that stretch reads LASLSPLRKASLSSSSSL.

The protein belongs to the FAM90 family.

The polypeptide is Protein FAM90A16 (Homo sapiens (Human)).